The following is a 1544-amino-acid chain: Zinc finger protein GLI2 (1544 aa).

The disordered stretch occupies residues 1–26 (METSAPAPALEKKEAKSGLLEDSSFP). Phosphoserine is present on residues S145, S230, S232, and S238. The interval 338–364 (SSSSSNCLNDANQNKQNSESAVSSTVN) is disordered. At S385 the chain carries Phosphoserine; by DYRK2. Residues 417 to 444 (TNCHWADCTKEYDTQEQLVHHINNEHIH) form a C2H2-type 1 zinc finger. The C2H2-type 2; degenerate zinc-finger motif lies at 455–477 (QACTREQKPFKAQYMLVVHMRRH). 3 consecutive C2H2-type zinc fingers follow at residues 483–507 (HKCT…LRSH), 513–538 (YVCE…NRTH), and 544–569 (YICK…KTVH). Disordered regions lie at residues 557–619 (DPSS…TSHT) and 635–682 (GLCQ…ALAD). Basic and acidic residues predominate over residues 569–585 (HGPDAHVTKKQRNDVHV). Low complexity predominate over residues 637–657 (CQSSPGAQSSCSSEPSPLGSA). At S707 the chain carries Phosphoserine. T708 carries the phosphothreonine modification. Residue K740 is modified to N6-acetyllysine; by EP300. 6 disordered regions span residues 781–800 (SQLQ…AYTV), 805–861 (SGIS…PGLL), 908–963 (ALPG…RRPD), 995–1016 (VQSH…RPPS), 1166–1220 (FGQY…CLGM), and 1422–1457 (GGCP…VSST). Polar residues-rich tracts occupy residues 790-800 (STSTMSSAYTV) and 805-814 (SGISPYFSSR). The segment covering 954 to 963 (RASDPVRRPD) has biased composition (basic and acidic residues). S997 carries the post-translational modification Phosphoserine; by DYRK2. 3 stretches are compositionally biased toward polar residues: residues 997–1009 (SHPS…TRNA), 1173–1190 (NPQS…TQPH), and 1200–1209 (SRGSYTQQPR).

Belongs to the GLI C2H2-type zinc-finger protein family. In terms of assembly, interacts with ZIC1 and ZIC2. Interacts with STK36. Interacts with SUFU; this inhibits transcriptional activation mediated by GLI2. Interacts (via C-terminal internal region) with FOXC1 (via N-terminus); this interaction is direct and increases GLI2 DNA-binding and transcriptional activity through a smoothened (SMO)-independent Hedgehog (Hh) signaling pathway. Post-translationally, phosphorylated in vitro by ULK3. Phosphorylated by DYRK2; this inhibits GLI2 transcription factor activity and promotes proteasomal degradation of GLI2. In terms of processing, acetylation at Lys-740 inhibits Hh target gene expression, probably by impeding entry into chromatin thus preventing promoter occupancy.

Its subcellular location is the nucleus. The protein localises to the cytoplasm. It localises to the cell projection. The protein resides in the cilium. In terms of biological role, functions as a transcription regulator in the hedgehog (Hh) pathway. Functions as a transcriptional activator. May also function as transcriptional repressor. Requires STK36 for full transcriptional activator activity. Binds to the DNA sequence 5'-GAACCACCCA-3' which is part of the TRE-2S regulatory element. Is involved in the smoothened (SHH) signaling pathway. Required for normal skeleton development. The protein is Zinc finger protein GLI2 of Mus musculus (Mouse).